We begin with the raw amino-acid sequence, 168 residues long: Thiol peroxidase (168 aa).

The Thioredoxin domain occupies 20–168 (PAVGSQLPAF…DYDKALAALA (149 aa)). The active-site Cysteine sulfenic acid (-SOH) intermediate is the C62. C62 and C96 are disulfide-bonded.

This sequence belongs to the peroxiredoxin family. Tpx subfamily. As to quaternary structure, homodimer.

The catalysed reaction is a hydroperoxide + [thioredoxin]-dithiol = an alcohol + [thioredoxin]-disulfide + H2O. Its function is as follows. Thiol-specific peroxidase that catalyzes the reduction of hydrogen peroxide and organic hydroperoxides to water and alcohols, respectively. Plays a role in cell protection against oxidative stress by detoxifying peroxides. This chain is Thiol peroxidase, found in Chlorobaculum tepidum (strain ATCC 49652 / DSM 12025 / NBRC 103806 / TLS) (Chlorobium tepidum).